The sequence spans 251 residues: 3-deoxy-manno-octulosonate cytidylyltransferase (251 aa).

It belongs to the KdsB family.

The protein resides in the cytoplasm. The catalysed reaction is 3-deoxy-alpha-D-manno-oct-2-ulosonate + CTP = CMP-3-deoxy-beta-D-manno-octulosonate + diphosphate. The protein operates within nucleotide-sugar biosynthesis; CMP-3-deoxy-D-manno-octulosonate biosynthesis; CMP-3-deoxy-D-manno-octulosonate from 3-deoxy-D-manno-octulosonate and CTP: step 1/1. Its pathway is bacterial outer membrane biogenesis; lipopolysaccharide biosynthesis. Activates KDO (a required 8-carbon sugar) for incorporation into bacterial lipopolysaccharide in Gram-negative bacteria. The protein is 3-deoxy-manno-octulosonate cytidylyltransferase of Vibrio vulnificus (strain YJ016).